A 236-amino-acid chain; its full sequence is tRNA1(Val) (adenine(37)-N6)-methyltransferase (236 aa).

Belongs to the methyltransferase superfamily. tRNA (adenine-N(6)-)-methyltransferase family.

It localises to the cytoplasm. The enzyme catalyses adenosine(37) in tRNA1(Val) + S-adenosyl-L-methionine = N(6)-methyladenosine(37) in tRNA1(Val) + S-adenosyl-L-homocysteine + H(+). Its function is as follows. Specifically methylates the adenine in position 37 of tRNA(1)(Val) (anticodon cmo5UAC). In Aeromonas hydrophila subsp. hydrophila (strain ATCC 7966 / DSM 30187 / BCRC 13018 / CCUG 14551 / JCM 1027 / KCTC 2358 / NCIMB 9240 / NCTC 8049), this protein is tRNA1(Val) (adenine(37)-N6)-methyltransferase.